A 323-amino-acid chain; its full sequence is Probable cell division protein WhiA (323 aa).

Positions 275-309 form a DNA-binding region, H-T-H motif; sequence TLKELGEMLTTGQVSKSGINHRLRKLDQIAERLRS.

It belongs to the WhiA family.

Its function is as follows. Involved in cell division and chromosome segregation. This chain is Probable cell division protein WhiA, found in Listeria innocua serovar 6a (strain ATCC BAA-680 / CLIP 11262).